Reading from the N-terminus, the 271-residue chain is tRNA (guanine-N(7)-)-methyltransferase (271 aa).

S-adenosyl-L-methionine-binding residues include glutamate 95, glutamate 120, aspartate 147, and aspartate 175. The active site involves aspartate 175. Substrate-binding positions include lysine 179, aspartate 211, and 249–252 (THFE).

This sequence belongs to the class I-like SAM-binding methyltransferase superfamily. TrmB family.

It catalyses the reaction guanosine(46) in tRNA + S-adenosyl-L-methionine = N(7)-methylguanosine(46) in tRNA + S-adenosyl-L-homocysteine. It functions in the pathway tRNA modification; N(7)-methylguanine-tRNA biosynthesis. Its function is as follows. Catalyzes the formation of N(7)-methylguanine at position 46 (m7G46) in tRNA. This chain is tRNA (guanine-N(7)-)-methyltransferase, found in Rhodopirellula baltica (strain DSM 10527 / NCIMB 13988 / SH1).